A 211-amino-acid chain; its full sequence is LexA repressor (211 aa).

A DNA-binding region (H-T-H motif) is located at residues 27 to 47 (QTEIARAFGFKGVRAVQHHLD). Residues S131 and K168 each act as for autocatalytic cleavage activity in the active site.

This sequence belongs to the peptidase S24 family. As to quaternary structure, homodimer.

It carries out the reaction Hydrolysis of Ala-|-Gly bond in repressor LexA.. Represses a number of genes involved in the response to DNA damage (SOS response), including recA and lexA. In the presence of single-stranded DNA, RecA interacts with LexA causing an autocatalytic cleavage which disrupts the DNA-binding part of LexA, leading to derepression of the SOS regulon and eventually DNA repair. In Xylella fastidiosa (strain M23), this protein is LexA repressor.